The chain runs to 162 residues: Glycine cleavage system H protein, mitochondrial (162 aa).

A mitochondrion-targeting transit peptide spans 1 to 31 (MALRMWASSTANALRLSSATRPHFSPLSRCF). In terms of domain architecture, Lipoyl-binding spans 53–135 (VATIGITDHA…YEDGWMIKVK (83 aa)). Lys-94 carries the N6-lipoyllysine modification.

The protein belongs to the GcvH family. As to quaternary structure, the glycine cleavage system is composed of four proteins: P, T, L and H. (R)-lipoate serves as cofactor.

Its subcellular location is the mitochondrion. In terms of biological role, the glycine cleavage system catalyzes the degradation of glycine. The H protein shuttles the methylamine group of glycine from the P protein to the T protein. This chain is Glycine cleavage system H protein, mitochondrial (GDCSH), found in Flaveria anomala (Yellowtops).